A 146-amino-acid chain; its full sequence is Hemoglobin subunit beta (146 aa).

The Globin domain occupies 2-146 (HWTAEEKQLI…VAHALARKYH (145 aa)). Residues histidine 63 and histidine 92 each coordinate heme b.

The protein belongs to the globin family. In terms of assembly, heterotetramer of two alpha chains and two beta chains. Red blood cells.

Its function is as follows. Involved in oxygen transport from the lung to the various peripheral tissues. This is Hemoglobin subunit beta (HBB) from Chloephaga melanoptera (Andean goose).